The primary structure comprises 427 residues: Tol-Pal system protein TolB (427 aa).

The signal sequence occupies residues 1–25 (MKTFAQLRLLLAAAALALLSFSAQA).

It belongs to the TolB family. As to quaternary structure, the Tol-Pal system is composed of five core proteins: the inner membrane proteins TolA, TolQ and TolR, the periplasmic protein TolB and the outer membrane protein Pal. They form a network linking the inner and outer membranes and the peptidoglycan layer.

It localises to the periplasm. In terms of biological role, part of the Tol-Pal system, which plays a role in outer membrane invagination during cell division and is important for maintaining outer membrane integrity. In Azoarcus sp. (strain BH72), this protein is Tol-Pal system protein TolB.